The chain runs to 228 residues: Sensory transduction protein RegX3 (228 aa).

A Response regulatory domain is found at 3-116; sequence SVLIVEDEES…ELIARIRAVL (114 aa). Asp52 carries the 4-aspartylphosphate modification. The segment at residues 129-228 is a DNA-binding region (ompR/PhoB-type); that stretch reads DGVLEAGPVR…VRGLGYKLEG (100 aa).

In terms of processing, phosphorylated by SenX3.

In terms of biological role, member of the two-component regulatory system SenX3/RegX3 involved in stress response. The system is involved in phosphate starvation response. Once phosphorylated by SenX3, activates the expression of the alkaline phosphatase phoA, the high-affinity phosphate transporter pstSCAB, phnDCE, phnF and senX3. May act as a negative regulator of NhaA. Acts by binding to a DNA motif consisting of an inverted repeat. The chain is Sensory transduction protein RegX3 from Mycolicibacterium smegmatis (strain ATCC 700084 / mc(2)155) (Mycobacterium smegmatis).